We begin with the raw amino-acid sequence, 552 residues long: Phosphoglucomutase (552 aa).

S143 (phosphoserine intermediate) is an active-site residue. The Mg(2+) site is built by S143, D295, D297, and D299.

The protein belongs to the phosphohexose mutase family. Mg(2+) serves as cofactor.

It carries out the reaction alpha-D-glucose 1-phosphate = alpha-D-glucose 6-phosphate. It participates in glycolipid metabolism; diglucosyl-diacylglycerol biosynthesis. In terms of biological role, catalyzes the interconversion between glucose-6-phosphate and alpha-glucose-1-phosphate. This is the first step in the biosynthesis of diglucosyl-diacylglycerol (Glc2-DAG), i.e. the predominant glycolipid found in the S.aureus membrane, which is also used as a membrane anchor for lipoteichoic acid (LTA). The polypeptide is Phosphoglucomutase (pgcA) (Staphylococcus aureus (strain Mu50 / ATCC 700699)).